The sequence spans 448 residues: Receptor homology region, transmembrane domain- and RING domain-containing protein 2 (448 aa).

A signal peptide spans 1 to 20; it reads MNRALVLLLYVCTVSCLASS. Topologically, residues 21 to 163 are lumenal; the sequence is KVILMRNNIT…IPSFENSAWS (143 aa). N-linked (GlcNAc...) asparagine glycosylation is found at asparagine 28 and asparagine 74. The PA domain occupies 60 to 144; that stretch reads DACQNLMNKP…ETGEVLKEYA (85 aa). Cysteines 62 and 87 form a disulfide. A helical membrane pass occupies residues 164-184; that stretch reads IMAVSFISLLAMSAVLATCFF. The Cytoplasmic segment spans residues 185–448; the sequence is VRRHRIRRRT…YASANSLPDC (264 aa). An RING-type; atypical zinc finger spans residues 232-274; that stretch reads CAICLEDYTVGDKLRLLPCCHKFHAACVDSWLTSWRTFCPVCK. The segment covering 344–378 has biased composition (low complexity); it reads QSSSNRRSPPISVSRSSVDLRQQAASPSPSPSQRS. 2 disordered regions span residues 344–380 and 402–424; these read QSSS…RSYI and MSPY…NYPL. Polar residues predominate over residues 408–423; that stretch reads SPSNASPAMAGSSNYP.

The protein resides in the protein storage vacuole membrane. It localises to the golgi apparatus membrane. Functionally, involved in the trafficking of vacuolar proteins. May function as a sorting receptor for protein trafficking to the protein storage vacuole (PSV). In Arabidopsis thaliana (Mouse-ear cress), this protein is Receptor homology region, transmembrane domain- and RING domain-containing protein 2 (RMR2).